We begin with the raw amino-acid sequence, 684 residues long: Cleavage and polyadenylation specificity factor subunit 3 (684 aa).

N-acetylserine is present on Ser-2. His-71, His-73, Asp-75, His-76, His-158, and Asp-179 together coordinate Zn(2+). His-396 serves as the catalytic Proton donor. His-418 lines the Zn(2+) pocket. Glycyl lysine isopeptide (Lys-Gly) (interchain with G-Cter in SUMO) cross-links involve residues Lys-462, Lys-465, and Lys-545. A Phosphoserine modification is found at Ser-659. Position 681 is a phosphothreonine (Thr-681).

It belongs to the metallo-beta-lactamase superfamily. RNA-metabolizing metallo-beta-lactamase-like family. CPSF3 subfamily. As to quaternary structure, component of the cleavage and polyadenylation specificity factor (CPSF) complex, composed of CPSF1, CPSF2, CPSF3, CPSF4 and FIP1L1. Interacts with CPSF2, CSTF2 and SYMPK. Interacts with TUT1; the interaction is direct and mediates the recruitment of the CPSF complex on the 3'UTR of pre-mRNAs. Interacts with WDR33. Interacts with ZC3H3. Zn(2+) serves as cofactor. Post-translationally, sumoylated on Lys-462, Lys-465 and Lys-545, preferentially by SUMO3.

The protein resides in the nucleus. Component of the cleavage and polyadenylation specificity factor (CPSF) complex that plays a key role in pre-mRNA 3'-end formation, recognizing the AAUAAA signal sequence and interacting with poly(A) polymerase and other factors to bring about cleavage and poly(A) addition. Has endonuclease activity, and functions as an mRNA 3'-end-processing endonuclease. Also involved in the histone 3'-end pre-mRNA processing. U7 snRNP-dependent protein that induces both the 3'-endoribonucleolytic cleavage of histone pre-mRNAs and acts as a 5' to 3' exonuclease for degrading the subsequent downstream cleavage product (DCP) of mature histone mRNAs. Cleavage occurs after the 5'-ACCCA-3' sequence in the histone pre-mRNA leaving a 3'hydroxyl group on the upstream fragment containing the stem loop (SL) and 5' phosphate on the downstream cleavage product (DCP) starting with CU nucleotides. The U7-dependent 5' to 3' exonuclease activity is processive and degrades the DCP RNA substrate even after complete removal of the U7-binding site. Binds to the downstream cleavage product (DCP) of histone pre-mRNAs and the cleaved DCP RNA substrate in a U7 snRNP dependent manner. Required for entering/progressing through S-phase of the cell cycle. Required for the selective processing of microRNAs (miRNAs) during embryonic stem cell differentiation via its interaction with ISY1. Required for the biogenesis of all miRNAs from the pri-miR-17-92 primary transcript except miR-92a. Only required for the biogenesis of miR-290 and miR-96 from the pri-miR-290-295 and pri-miR-96-183 primary transcripts, respectively. The polypeptide is Cleavage and polyadenylation specificity factor subunit 3 (CPSF3) (Homo sapiens (Human)).